The sequence spans 566 residues: Urease subunit alpha (566 aa).

In terms of domain architecture, Urease spans 128–566 (GGVDTHIHFI…LPMAQRYFLF (439 aa)). The Ni(2+) site is built by His-133, His-135, and Lys-216. Lys-216 carries the N6-carboxylysine modification. His-218 provides a ligand contact to substrate. The Ni(2+) site is built by His-245 and His-271. The active-site Proton donor is His-319. Asp-359 contacts Ni(2+).

This sequence belongs to the metallo-dependent hydrolases superfamily. Urease alpha subunit family. As to quaternary structure, may form a heterohexamer of 3 UreC (alpha) and 3 UreAB (gamma/beta) subunits. May also form a heterotrimer of UreA (gamma), UreB (beta) and UreC (alpha) subunits. Three heterotrimers associate to form the active enzyme. Ni cation is required as a cofactor. Post-translationally, carboxylation allows a single lysine to coordinate two nickel ions.

It is found in the cytoplasm. It catalyses the reaction urea + 2 H2O + H(+) = hydrogencarbonate + 2 NH4(+). It functions in the pathway nitrogen metabolism; urea degradation; CO(2) and NH(3) from urea (urease route): step 1/1. The polypeptide is Urease subunit alpha (Pseudomonas syringae pv. tomato (strain ATCC BAA-871 / DC3000)).